A 768-amino-acid chain; its full sequence is Histone-lysine N-methyltransferase, H3 lysine-36 specific (768 aa).

One can recognise an AWS domain in the interval A45–K90. The SET domain occupies A92–N209. Residues E216–G232 form the Post-SET domain. Residues K411 to D452 are compositionally biased toward basic and acidic residues. Disordered regions lie at residues K411–Q508, K533–Q610, and V680–E768. Residues N453 to P469 show a composition bias toward polar residues. One can recognise a WW domain in the interval R501 to A534. 3 stretches are compositionally biased toward basic and acidic residues: residues N555–E568, K682–E734, and T755–E768.

The protein belongs to the class V-like SAM-binding methyltransferase superfamily. Histone-lysine methyltransferase family. SET2 subfamily.

It is found in the nucleus. The protein resides in the chromosome. The catalysed reaction is L-lysyl(36)-[histone H3] + 3 S-adenosyl-L-methionine = N(6),N(6),N(6)-trimethyl-L-lysyl(36)-[histone H3] + 3 S-adenosyl-L-homocysteine + 3 H(+). Histone methyltransferase that trimethylates histone H3 'Lys-36' forming H3K36me3. Involved in transcription elongation as well as in transcription repression. This is Histone-lysine N-methyltransferase, H3 lysine-36 specific (set-2) from Yarrowia lipolytica (strain CLIB 122 / E 150) (Yeast).